The following is a 311-amino-acid chain: L-lactate dehydrogenase (311 aa).

NAD(+) contacts are provided by residues Val-12, Asp-33, Lys-38, Tyr-63, and 77–78; that span reads GA. Substrate contacts are provided by Gln-80 and Arg-86. Residues Ser-99, 116 to 118, and Ser-141 each bind NAD(+); that span reads VTN. 118–121 contributes to the substrate binding site; that stretch reads NPVD. 146–149 contacts substrate; it reads DSSR. The beta-D-fructose 1,6-bisphosphate site is built by Arg-151 and His-166. Residue His-173 is the Proton acceptor of the active site. Tyr-219 carries the post-translational modification Phosphotyrosine. Thr-228 is a binding site for substrate.

This sequence belongs to the LDH/MDH superfamily. LDH family. As to quaternary structure, homotetramer.

It localises to the cytoplasm. It carries out the reaction (S)-lactate + NAD(+) = pyruvate + NADH + H(+). It participates in fermentation; pyruvate fermentation to lactate; (S)-lactate from pyruvate: step 1/1. With respect to regulation, allosterically activated by fructose 1,6-bisphosphate (FBP). Its function is as follows. Catalyzes the conversion of lactate to pyruvate. The protein is L-lactate dehydrogenase of Thermoanaerobacterium saccharolyticum (strain DSM 8691 / JW/SL-YS485).